The primary structure comprises 351 residues: uncharacterized protein (351 aa).

The protein belongs to the glycosyltransferase group 1 family. Glycosyltransferase 4 subfamily.

This is an uncharacterized protein from Methanocaldococcus jannaschii (strain ATCC 43067 / DSM 2661 / JAL-1 / JCM 10045 / NBRC 100440) (Methanococcus jannaschii).